The chain runs to 349 residues: Oxygen-dependent coproporphyrinogen-III oxidase (349 aa).

Disordered stretches follow at residues 1-21 (MGAS…KRAR) and 37-60 (SLDG…GRSK). S105 contributes to the substrate binding site. Positions 109 and 119 each coordinate a divalent metal cation. The active-site Proton donor is the H119. A substrate-binding site is contributed by 121–123 (NYR). Residues H153 and H183 each coordinate a divalent metal cation. An important for dimerization region spans residues 273 to 308 (YAEFNLVWDRGTIFGLQTNGRTESILMSLPPLARWE).

It belongs to the aerobic coproporphyrinogen-III oxidase family. Homodimer. The cofactor is a divalent metal cation.

It is found in the cytoplasm. The enzyme catalyses coproporphyrinogen III + O2 + 2 H(+) = protoporphyrinogen IX + 2 CO2 + 2 H2O. It functions in the pathway porphyrin-containing compound metabolism; protoporphyrin-IX biosynthesis; protoporphyrinogen-IX from coproporphyrinogen-III (O2 route): step 1/1. In terms of biological role, involved in the heme and chlorophyll biosynthesis. Catalyzes the aerobic oxidative decarboxylation of propionate groups of rings A and B of coproporphyrinogen-III to yield the vinyl groups in protoporphyrinogen-IX. The sequence is that of Oxygen-dependent coproporphyrinogen-III oxidase from Prochlorococcus marinus (strain MIT 9313).